Consider the following 496-residue polypeptide: Fusarielin biosynthesis cluster transcription factor FSL7 (496 aa).

Positions 16–46 (CDRCHELKIRCTRTGGTESRCDRCEKNDIDC) form a DNA-binding region, zn(2)-C6 fungal-type. Disordered stretches follow at residues 57–102 (PKSQ…SINS), 189–224 (RSINHRSGSENESMEGNAELQSTQSASGSPQEEDQM), 281–307 (ANHTSSSSSSNSTTVDGPSEIRNQSRS), 348–379 (GSTSSSTYNDTTAHPSSASLPSQTGGPTKPRT), and 444–470 (MTREQHVSTGHGPDRHTSPVLSSAQAA). Composition is skewed to polar residues over residues 65–89 (GPNTTARQNDTTTRGRIQQEQQEQM) and 207–218 (ELQSTQSASGSP). The span at 281-294 (ANHTSSSSSSNSTT) shows a compositional bias: low complexity. Over residues 355 to 379 (YNDTTAHPSSASLPSQTGGPTKPRT) the composition is skewed to polar residues. Residues 444–460 (MTREQHVSTGHGPDRHT) show a composition bias toward basic and acidic residues.

The protein localises to the nucleus. Functionally, transcription regulator that specifically up-regulates the gene cluster that mediates the biosynthesis of fusarielins F, G and H, decaketide compounds with 5 methylations and a decaline core that act as mycoestrogens as they stimulate growth of MCF-7 breast cancer cells. Probably binds the 5'-CGGNNNCCG-3' motif present in the promoter of all the cluster genes. This chain is Fusarielin biosynthesis cluster transcription factor FSL7, found in Gibberella zeae (strain ATCC MYA-4620 / CBS 123657 / FGSC 9075 / NRRL 31084 / PH-1) (Wheat head blight fungus).